A 139-amino-acid chain; its full sequence is Large ribosomal subunit protein uL16 (139 aa).

A compositionally biased stretch (basic residues) spans 1–20 (MLIPKRTKYRKQHRPVRRGM). The disordered stretch occupies residues 1 to 21 (MLIPKRTKYRKQHRPVRRGMS).

The protein belongs to the universal ribosomal protein uL16 family. In terms of assembly, part of the 50S ribosomal subunit.

In terms of biological role, binds 23S rRNA and is also seen to make contacts with the A and possibly P site tRNAs. This Bifidobacterium adolescentis (strain ATCC 15703 / DSM 20083 / NCTC 11814 / E194a) protein is Large ribosomal subunit protein uL16.